We begin with the raw amino-acid sequence, 90 residues long: Acylphosphatase (90 aa).

Residues alanine 3–tyrosine 90 form the Acylphosphatase-like domain. Active-site residues include arginine 18 and asparagine 36.

Belongs to the acylphosphatase family.

It catalyses the reaction an acyl phosphate + H2O = a carboxylate + phosphate + H(+). This chain is Acylphosphatase (acyP), found in Pediococcus pentosaceus (strain ATCC 25745 / CCUG 21536 / LMG 10740 / 183-1w).